A 466-amino-acid polypeptide reads, in one-letter code: Probable ribonuclease FAU-1 (466 aa).

The 63-residue stretch at G90 to T152 folds into the S1 motif domain.

It belongs to the FAU-1 family.

Functionally, probable RNase involved in rRNA stability through maturation and/or degradation of precursor rRNAs. Binds to RNA in loop regions with AU-rich sequences. This is Probable ribonuclease FAU-1 from Haloarcula marismortui (strain ATCC 43049 / DSM 3752 / JCM 8966 / VKM B-1809) (Halobacterium marismortui).